We begin with the raw amino-acid sequence, 292 residues long: Short chain dehydrogenase mpl6 (292 aa).

8 residues coordinate NADP(+): valine 37, aspartate 95, asparagine 122, arginine 156, tyrosine 188, lysine 192, valine 221, and threonine 223. Tyrosine 188 serves as the catalytic Proton donor. Catalysis depends on lysine 192, which acts as the Lowers pKa of active site Tyr.

Belongs to the short-chain dehydrogenases/reductases (SDR) family.

Its pathway is mycotoxin biosynthesis. Functionally, short chain dehydrogenase; part of the gene cluster that mediates the biosynthesis of the mycotoxin citrinin, a hepato-nephrotoxic compound to humans due to inhibition of respiration complex III. The pathway begins with the synthesis of a keto-aldehyde intermediate by the citrinin PKS (pksCT) from successive condensations of 4 malonyl-CoA units, presumably with a simple acetyl-CoA starter unit. Release of the keto-aldehyde intermediate is consistent with the presence of the C-terminal reductive release domain. Mp11 collaborates with pksCT by catalyzing the hydrolysis of ACP-bound acyl intermediates to free the ACP from stalled intermediates. Mpl2 then catalyzes the oxidation of the C-12 methyl of the ketone intermediate to an alcohol intermediate which is further oxidized by the oxidoreductase mpl7 to produce a bisaldehyde intermediate. The fourth catalytic step is catalyzed by the mpl4 aldehyde dehydrogenase. The final transformation is the reduction of C-3 by mpl6 to provide the chemically stable citrinin nucleus. The polypeptide is Short chain dehydrogenase mpl6 (Monascus purpureus (Red mold)).